The sequence spans 159 residues: Ribosomal RNA large subunit methyltransferase H (159 aa).

S-adenosyl-L-methionine contacts are provided by residues Leu-76, Gly-107, and 126–131; that span reads LSKLTM.

This sequence belongs to the RNA methyltransferase RlmH family. Homodimer.

It localises to the cytoplasm. It carries out the reaction pseudouridine(1915) in 23S rRNA + S-adenosyl-L-methionine = N(3)-methylpseudouridine(1915) in 23S rRNA + S-adenosyl-L-homocysteine + H(+). Functionally, specifically methylates the pseudouridine at position 1915 (m3Psi1915) in 23S rRNA. This is Ribosomal RNA large subunit methyltransferase H from Acinetobacter baylyi (strain ATCC 33305 / BD413 / ADP1).